Here is a 659-residue protein sequence, read N- to C-terminus: Nicastrin (659 aa).

The N-terminal stretch at 1–22 (MKIKNYFIIVFIIIVLSTDVIS) is a signal peptide. Over 23–627 (SQSSIEDKMY…LFQVGSYANE (605 aa)) the chain is Extracellular. Residues Asn-94, Asn-172, Asn-305, Asn-389, Asn-451, Asn-475, Asn-550, Asn-553, and Asn-600 are each glycosylated (N-linked (GlcNAc...) asparagine). Residues 628-648 (IWFLVSGLIELLLSVGIIFYI) form a helical membrane-spanning segment. The Cytoplasmic segment spans residues 649–659 (KKYLSKRYKLL).

This sequence belongs to the nicastrin family. As to quaternary structure, homodimer. Component of the gamma-secretase complex, a complex composed of a presenilin homodimer, nicastrin, aph1 and pen2.

The protein localises to the membrane. Essential subunit of the gamma-secretase complex, an endoprotease complex that catalyzes the intramembrane cleavage of integral membrane proteins such as Notch receptors and APP (amyloid-beta precursor protein). It probably represents a stabilizing cofactor required for the assembly of the gamma-secretase complex. The polypeptide is Nicastrin (ncstn) (Dictyostelium discoideum (Social amoeba)).